The primary structure comprises 53 residues: Small polypeptide DEVIL 16 (53 aa).

A glycan (N-linked (GlcNAc...) asparagine) is linked at Asn-6. Positions 14–45 (TFGQKCSHVVKKQRAKFYILRRCIAMLVCWHD) are required for DVL/RTFL small polypeptide activity. A helical membrane pass occupies residues 30-46 (FYILRRCIAMLVCWHDQ).

The protein belongs to the DVL/RTFL small polypeptides family. As to expression, mostly expressed in stems, flower buds, flowers and seedling shoots, to a lesser extent, in roots and young cauline leaves, but not in mature rosette leaves. Barely observed in cotyledons and leaf primordia.

Its subcellular location is the cell membrane. Small polypeptide acting as a regulatory molecule which coordinates cellular responses required for differentiation, growth and development, probably by restricting polar cell proliferation in lateral organs (e.g. leaves) and coordinating socket cell recruitment and differentiation at trichome sites. Regulates the positional cue and cell proliferation along the body axis. This is Small polypeptide DEVIL 16 from Arabidopsis thaliana (Mouse-ear cress).